The primary structure comprises 92 residues: YcgL domain-containing protein SO_2575 (92 aa).

Positions 1-85 (MLCAVYKSSR…PQVNLLAEHR (85 aa)) constitute a YcgL domain.

This is YcgL domain-containing protein SO_2575 from Shewanella oneidensis (strain ATCC 700550 / JCM 31522 / CIP 106686 / LMG 19005 / NCIMB 14063 / MR-1).